The sequence spans 433 residues: UDP-N-acetylmuramate--L-alanine ligase (433 aa).

108 to 114 (GAHGKTS) provides a ligand contact to ATP.

The protein belongs to the MurCDEF family.

It localises to the cytoplasm. It catalyses the reaction UDP-N-acetyl-alpha-D-muramate + L-alanine + ATP = UDP-N-acetyl-alpha-D-muramoyl-L-alanine + ADP + phosphate + H(+). It functions in the pathway cell wall biogenesis; peptidoglycan biosynthesis. In terms of biological role, cell wall formation. This chain is UDP-N-acetylmuramate--L-alanine ligase, found in Anoxybacillus flavithermus (strain DSM 21510 / WK1).